Here is a 508-residue protein sequence, read N- to C-terminus: Phenylalanine--tRNA ligase alpha subunit (508 aa).

Ala2 is modified (N-acetylalanine). At Thr190 the chain carries Phosphothreonine. A phosphoserine mark is found at Ser193 and Ser301. N6-acetyllysine is present on Lys311. L-phenylalanine-binding positions include Thr329, 372-374 (QIE), and Tyr412. Glu414 is a binding site for Mg(2+). Position 438 (Phe438) interacts with L-phenylalanine.

Belongs to the class-II aminoacyl-tRNA synthetase family. Phe-tRNA synthetase alpha subunit type 2 subfamily. As to quaternary structure, heterotetramer; dimer of two heterodimers formed by FARSA and FARSB.

It is found in the cytoplasm. It catalyses the reaction tRNA(Phe) + L-phenylalanine + ATP = L-phenylalanyl-tRNA(Phe) + AMP + diphosphate + H(+). In Homo sapiens (Human), this protein is Phenylalanine--tRNA ligase alpha subunit (FARSA).